Consider the following 875-residue polypeptide: DNA mismatch repair protein MutS (875 aa).

ATP is bound at residue 626–633 (GPNMAGKS). The segment at 830–855 (RAAPPPPAPAAPKTSPVEERLREIQP) is disordered. Positions 845–855 (PVEERLREIQP) are enriched in basic and acidic residues.

The protein belongs to the DNA mismatch repair MutS family.

This protein is involved in the repair of mismatches in DNA. It is possible that it carries out the mismatch recognition step. This protein has a weak ATPase activity. In Cereibacter sphaeroides (strain ATCC 17023 / DSM 158 / JCM 6121 / CCUG 31486 / LMG 2827 / NBRC 12203 / NCIMB 8253 / ATH 2.4.1.) (Rhodobacter sphaeroides), this protein is DNA mismatch repair protein MutS.